The following is a 285-amino-acid chain: Bifunctional protein FolD (285 aa).

NADP(+) is bound by residues 166-168 and Ile232; that span reads GAS.

This sequence belongs to the tetrahydrofolate dehydrogenase/cyclohydrolase family. In terms of assembly, homodimer.

It catalyses the reaction (6R)-5,10-methylene-5,6,7,8-tetrahydrofolate + NADP(+) = (6R)-5,10-methenyltetrahydrofolate + NADPH. The enzyme catalyses (6R)-5,10-methenyltetrahydrofolate + H2O = (6R)-10-formyltetrahydrofolate + H(+). Its pathway is one-carbon metabolism; tetrahydrofolate interconversion. Functionally, catalyzes the oxidation of 5,10-methylenetetrahydrofolate to 5,10-methenyltetrahydrofolate and then the hydrolysis of 5,10-methenyltetrahydrofolate to 10-formyltetrahydrofolate. This chain is Bifunctional protein FolD, found in Vibrio atlanticus (strain LGP32) (Vibrio splendidus (strain Mel32)).